The following is a 131-amino-acid chain: Small ribosomal subunit protein uS8 (131 aa).

Belongs to the universal ribosomal protein uS8 family. As to quaternary structure, part of the 30S ribosomal subunit. Contacts proteins S5 and S12.

One of the primary rRNA binding proteins, it binds directly to 16S rRNA central domain where it helps coordinate assembly of the platform of the 30S subunit. The sequence is that of Small ribosomal subunit protein uS8 from Azobacteroides pseudotrichonymphae genomovar. CFP2.